The chain runs to 378 residues: Chaperone protein DnaJ (378 aa).

The J domain occupies Asp4–Gly68. Residues Gly136–Thr218 form a CR-type zinc finger. Cys149, Cys152, Cys166, Cys169, Cys192, Cys195, Cys206, and Cys209 together coordinate Zn(2+). CXXCXGXG motif repeat units follow at residues Cys149 to Gly156, Cys166 to Gly173, Cys192 to Gly199, and Cys206 to Gly213.

This sequence belongs to the DnaJ family. As to quaternary structure, homodimer. Zn(2+) is required as a cofactor.

It is found in the cytoplasm. Participates actively in the response to hyperosmotic and heat shock by preventing the aggregation of stress-denatured proteins and by disaggregating proteins, also in an autonomous, DnaK-independent fashion. Unfolded proteins bind initially to DnaJ; upon interaction with the DnaJ-bound protein, DnaK hydrolyzes its bound ATP, resulting in the formation of a stable complex. GrpE releases ADP from DnaK; ATP binding to DnaK triggers the release of the substrate protein, thus completing the reaction cycle. Several rounds of ATP-dependent interactions between DnaJ, DnaK and GrpE are required for fully efficient folding. Also involved, together with DnaK and GrpE, in the DNA replication of plasmids through activation of initiation proteins. In Picosynechococcus sp. (strain ATCC 27264 / PCC 7002 / PR-6) (Agmenellum quadruplicatum), this protein is Chaperone protein DnaJ.